The chain runs to 162 residues: MSSTDMAVLLLVIALIFLIVNTLDNPLIMIGTRLIESTRVKVGPFIHVLERDGDRLFVIEPEQTLLYNTAGLIYYYFEGGASRRFCPVGEQAIVRIGLTDIGLINENGIYNVSCTNTSSWDLYEHFKNDSFEWKLPTFYEKTSIIDIINELIRYGYVRIGYQ.

It belongs to the baculoviridae 19 kDa protein family.

This is an uncharacterized protein from Tortricidae (ClGV).